A 350-amino-acid chain; its full sequence is Histidinol-phosphate aminotransferase 1 (350 aa).

The residue at position 210 (K210) is an N6-(pyridoxal phosphate)lysine.

It belongs to the class-II pyridoxal-phosphate-dependent aminotransferase family. Histidinol-phosphate aminotransferase subfamily. In terms of assembly, homodimer. The cofactor is pyridoxal 5'-phosphate.

It carries out the reaction L-histidinol phosphate + 2-oxoglutarate = 3-(imidazol-4-yl)-2-oxopropyl phosphate + L-glutamate. It functions in the pathway amino-acid biosynthesis; L-histidine biosynthesis; L-histidine from 5-phospho-alpha-D-ribose 1-diphosphate: step 7/9. The polypeptide is Histidinol-phosphate aminotransferase 1 (Pseudomonas fluorescens (strain Pf0-1)).